The sequence spans 238 residues: MNEFFPLASAAGMTVGLAVCALIVGLALAMFFAVWESAKWRPVAWAGSALVTILRGLPEILVVLFIYFGSSQLLLTLSDGFTINLGFVQIPVQMDIENFDVSPFLCGVIALSLLYAAYASQTLRGALKAVPVGQWESGQALGLSKSAIFFRLVMPQMWRHALPGLGNQWLVLLKDTALVSLISVNDLMLQTKSIATRTQEPFTWYIVAAAIYLVITLLSQYILKRIDLRATRFERRPS.

At 1–14 (MNEFFPLASAAGMT) the chain is on the periplasmic side. Residues 11-223 (AGMTVGLAVC…VITLLSQYIL (213 aa)) enclose the ABC transmembrane type-1 domain. The helical transmembrane segment at 15-35 (VGLAVCALIVGLALAMFFAVW) threads the bilayer. The Cytoplasmic portion of the chain corresponds to 36–48 (ESAKWRPVAWAGS). A helical transmembrane segment spans residues 49-69 (ALVTILRGLPEILVVLFIYFG). Over 70 to 98 (SSQLLLTLSDGFTINLGFVQIPVQMDIEN) the chain is Periplasmic. The helical transmembrane segment at 99-119 (FDVSPFLCGVIALSLLYAAYA) threads the bilayer. The Cytoplasmic segment spans residues 120-168 (SQTLRGALKAVPVGQWESGQALGLSKSAIFFRLVMPQMWRHALPGLGNQ). The chain crosses the membrane as a helical span at residues 169-189 (WLVLLKDTALVSLISVNDLML). Residues 190–201 (QTKSIATRTQEP) are Periplasmic-facing. A helical transmembrane segment spans residues 202-222 (FTWYIVAAAIYLVITLLSQYI). Residues 223 to 238 (LKRIDLRATRFERRPS) lie on the Cytoplasmic side of the membrane.

It belongs to the binding-protein-dependent transport system permease family. HisMQ subfamily. The complex is composed of two ATP-binding proteins (ArtP), two transmembrane proteins (ArtM and ArtQ) and two solute-binding proteins (ArtJ and ArtI).

Its subcellular location is the cell inner membrane. Part of the ABC transporter complex ArtPIQMJ involved in arginine transport. Probably responsible for the translocation of the substrate across the membrane. This Escherichia coli O6:H1 (strain CFT073 / ATCC 700928 / UPEC) protein is Arginine ABC transporter permease protein ArtQ (artQ).